A 530-amino-acid chain; its full sequence is UDP-glucuronosyltransferase 1A7 (530 aa).

A signal peptide spans 1–25 (MARAGWTGLLPLYVCLLLTCGFAKA). Asn-71, Asn-292, and Asn-344 each carry an N-linked (GlcNAc...) asparagine glycan. The chain crosses the membrane as a helical span at residues 488–504 (VIGFLLAVVLTVAFITF).

Belongs to the UDP-glycosyltransferase family. In terms of assembly, homodimer. Homooligomer. Interacts with UGT1A1, UGT1A3, UGT1A4, UGT1A6, UGT1A8, UGT1A9 and UGT1A10 to form heterodimers. Isoform 1 interacts with isoform 2/i2 suggesting that oligomerization is involved in negative regulation of transferase activity by isoform 2. Isoform 1 also interacts with respective i2 isoforms of UGT1A1, UGT1A3, UGT1A4, UGT1A6, UGT1A8, UGT1A9 and UGT1A10. As to expression, liver and gastric tissue. Isoform 1 and isoform 2 are expressed in esophagus. Neither isoform is expressed in liver, kidney, colon and small intestine.

It localises to the endoplasmic reticulum membrane. The enzyme catalyses glucuronate acceptor + UDP-alpha-D-glucuronate = acceptor beta-D-glucuronoside + UDP + H(+). It catalyses the reaction 17alpha-estradiol + UDP-alpha-D-glucuronate = 17alpha-estradiol 3-O-(beta-D-glucuronate) + UDP + H(+). The catalysed reaction is prunetin + UDP-alpha-D-glucuronate = prunetin-5-O-beta-D-glucuronide + UDP. It carries out the reaction 5-epi-5-F2t-IsoP + UDP-alpha-D-glucuronate = 5-epi-5-F2t-IsoP-glucuronide + UDP + H(+). The enzyme catalyses (E)-ferulate + UDP-alpha-D-glucuronate = (E)-ferulic acid beta-D-glucuronate ester + UDP. It catalyses the reaction candesartan + UDP-alpha-D-glucuronate = candesartan O-beta-D-glucuronoside + UDP. The catalysed reaction is SN-38 + UDP-alpha-D-glucuronate = SN-38 O-beta-D-glucuronide + UDP + H(+). It carries out the reaction mycophenolate + UDP-alpha-D-glucuronate = mycophenolate 7-O-beta-D-glucuronide + UDP + H(+). In terms of biological role, UDP-glucuronosyltransferase (UGT) that catalyzes phase II biotransformation reactions in which lipophilic substrates are conjugated with glucuronic acid to increase the metabolite's water solubility, thereby facilitating excretion into either the urine or bile. Essential for the elimination and detoxification of drugs, xenobiotics and endogenous compounds. Catalyzes the glucuronidation of endogenous estrogen hormone epiestradiol. Involved in the glucuronidation of F2-isoprostane (5-epi-5-F2t-IsoP). Involved in the glucuronidation of the phytochemical ferulic acid at the carboxylic acid group. Also catalyzes the glucuronidation of the isoflavones genistein, daidzein, glycitein, formononetin, biochanin A and prunetin, which are phytoestrogens with anticancer and cardiovascular properties. Involved in the glucuronidation of the AGTR1 angiotensin receptor antagonist caderastan, a drug which can inhibit the effect of angiotensin II. Involved in the biotransformation of 7-ethyl-10-hydroxycamptothecin (SN-38), the pharmacologically active metabolite of the anticancer drug irinotecan. Also metabolizes mycophenolate, an immunosuppressive agent. Lacks UGT glucuronidation activity but acts as a negative regulator of isoform 1. In Homo sapiens (Human), this protein is UDP-glucuronosyltransferase 1A7.